Here is a 153-residue protein sequence, read N- to C-terminus: Endoribonuclease YbeY (153 aa).

Zn(2+) is bound by residues histidine 114, histidine 118, and histidine 124.

This sequence belongs to the endoribonuclease YbeY family. Requires Zn(2+) as cofactor.

The protein resides in the cytoplasm. Its function is as follows. Single strand-specific metallo-endoribonuclease involved in late-stage 70S ribosome quality control and in maturation of the 3' terminus of the 16S rRNA. This chain is Endoribonuclease YbeY, found in Shewanella sp. (strain MR-4).